Reading from the N-terminus, the 432-residue chain is Luc7-like protein 3 (432 aa).

Position 1 is an N-acetylmethionine (Met-1). Phosphoserine is present on residues Ser-3, Ser-110, and Ser-115. Positions 124 to 181 form a coiled coil; sequence KNEEKIQVLTDKIDVLLQQIEELGSEGKVEEAQGMMKLVEQLKEERELLRSTTSTIES. Lys-231 is subject to N6-acetyllysine. Basic and acidic residues predominate over residues 234 to 287; it reads LRKRTEEPDRDERLKKEKQEREEREKEREREREERERKRRREEEEREKERARDR. Residues 234–432 are disordered; that stretch reads LRKRTEEPDR…IKSEGDTQSN (199 aa). The segment covering 288–301 has biased composition (basic residues); sequence ERRKRSRSRSRHSS. Positions 302-311 are enriched in basic and acidic residues; that stretch reads RTSDRRCSRS. A compositionally biased stretch (basic residues) spans 312–367; the sequence is RDHKRSRSRERRRSRSRDRRRSRSHDRSERKHRSRSRDRRRSKSRDRKSYKHRSKS. Residues 368–414 show a composition bias toward basic and acidic residues; that stretch reads RDREQDRKSKEKEKRGSDDKKSSVKSSSREKQSEDTNTESKESDTKN. At Ser-420 the chain carries Phosphoserine. Residues 421–432 are compositionally biased toward basic and acidic residues; it reads EDIKSEGDTQSN. Residue Lys-424 forms a Glycyl lysine isopeptide (Lys-Gly) (interchain with G-Cter in SUMO1); alternate linkage. Lys-424 is covalently cross-linked (Glycyl lysine isopeptide (Lys-Gly) (interchain with G-Cter in SUMO2); alternate). Ser-425 and Ser-431 each carry phosphoserine.

This sequence belongs to the Luc7 family. As to quaternary structure, may interact with SFRS1 and form homodimers. Interacts with JMJD6. Interacts with RBM25. Interacts with RSRC1 (via Arg/Ser-rich domain). Interacts with RRP1B.

It is found in the nucleus speckle. Binds cAMP regulatory element DNA sequence. May play a role in RNA splicing. The chain is Luc7-like protein 3 (LUC7L3) from Bos taurus (Bovine).